The sequence spans 443 residues: Pyrrolysine--tRNA ligase (443 aa).

The tract at residues 103 to 177 (VRKAMPKSVA…PAAPVPTSAP (75 aa)) is disordered. Residues 131-177 (PAPATPVSAPAQAPAPSTGSASATSASAQRMANSAAAPAAPVPTSAP) are compositionally biased toward low complexity.

It belongs to the class-II aminoacyl-tRNA synthetase family.

It localises to the cytoplasm. The catalysed reaction is tRNA(Pyl) + L-pyrrolysine + ATP = L-pyrrolysyl-tRNA(Pyl) + AMP + diphosphate. Its function is as follows. Catalyzes the attachment of pyrrolysine to tRNA(Pyl). Pyrrolysine is a lysine derivative encoded by the termination codon UAG. This is Pyrrolysine--tRNA ligase from Methanosarcina acetivorans (strain ATCC 35395 / DSM 2834 / JCM 12185 / C2A).